We begin with the raw amino-acid sequence, 188 residues long: Elongation factor P (188 aa).

It belongs to the elongation factor P family.

The protein resides in the cytoplasm. It participates in protein biosynthesis; polypeptide chain elongation. In terms of biological role, involved in peptide bond synthesis. Stimulates efficient translation and peptide-bond synthesis on native or reconstituted 70S ribosomes in vitro. Probably functions indirectly by altering the affinity of the ribosome for aminoacyl-tRNA, thus increasing their reactivity as acceptors for peptidyl transferase. In Parabacteroides distasonis (strain ATCC 8503 / DSM 20701 / CIP 104284 / JCM 5825 / NCTC 11152), this protein is Elongation factor P.